We begin with the raw amino-acid sequence, 95 residues long: Protein TusB (95 aa).

This sequence belongs to the DsrH/TusB family. As to quaternary structure, heterohexamer, formed by a dimer of trimers. The hexameric TusBCD complex contains 2 copies each of TusB, TusC and TusD. The TusBCD complex interacts with TusE.

The protein resides in the cytoplasm. Part of a sulfur-relay system required for 2-thiolation of 5-methylaminomethyl-2-thiouridine (mnm(5)s(2)U) at tRNA wobble positions. This is Protein TusB from Shigella sonnei (strain Ss046).